The primary structure comprises 169 residues: Photosystem I assembly protein Ycf3 (169 aa).

TPR repeat units follow at residues 35-68 (AFTYYRDGMSAQSEGEYAEALQNYYEAMRLETDP), 72-105 (SYILYNIGLVHTSNGEHTKALEYYFQALERNPSL), and 120-153 (GEQAIRQGDPETAEAWFDQAAEYWEQAIALAPGN).

This sequence belongs to the Ycf3 family.

It localises to the plastid. The protein localises to the chloroplast thylakoid membrane. In terms of biological role, essential for the assembly of the photosystem I (PSI) complex. May act as a chaperone-like factor to guide the assembly of the PSI subunits. The sequence is that of Photosystem I assembly protein Ycf3 from Pinus koraiensis (Korean pine).